A 138-amino-acid chain; its full sequence is Basic phospholipase A2 Cvv-N6 (138 aa).

The N-terminal stretch at 1 to 16 (MRTFWIVALLLVGVEG) is a signal peptide. Disulfide bonds link Cys-42–Cys-131, Cys-44–Cys-60, Cys-59–Cys-111, Cys-65–Cys-138, Cys-66–Cys-104, Cys-73–Cys-97, and Cys-91–Cys-102. Ca(2+) is bound by residues Tyr-43, Gly-45, and Gly-47. His-63 is an active-site residue. Asp-64 is a Ca(2+) binding site. Residue Asp-105 is part of the active site.

This sequence belongs to the phospholipase A2 family. Group II subfamily. D49 sub-subfamily. As to quaternary structure, monomer. Binds to calmodulin. Ca(2+) is required as a cofactor. In terms of tissue distribution, expressed by the venom gland.

The protein localises to the secreted. It catalyses the reaction a 1,2-diacyl-sn-glycero-3-phosphocholine + H2O = a 1-acyl-sn-glycero-3-phosphocholine + a fatty acid + H(+). With respect to regulation, heparin and wedelolactone inhibit the myotoxic activity. The PLA2 inhibitor, para-bromophenacyl bromide (BPB), inhibits enzymatic and myotoxic activities. Its function is as follows. Snake venom phospholipase A2 (PLA2) that is myotoxic and displays moderate edema-inducing activity in rat paws. Does not show neurotoxic activity. PLA2 catalyzes the calcium-dependent hydrolysis of the 2-acyl groups in 3-sn-phosphoglycerides. The protein is Basic phospholipase A2 Cvv-N6 of Crotalus viridis viridis (Prairie rattlesnake).